The chain runs to 372 residues: Alanine racemase (372 aa).

Residue K35 is the Proton acceptor; specific for D-alanine of the active site. K35 carries the post-translational modification N6-(pyridoxal phosphate)lysine. Residue R143 coordinates substrate. The Proton acceptor; specific for L-alanine role is filled by Y268. M316 lines the substrate pocket.

Belongs to the alanine racemase family. Requires pyridoxal 5'-phosphate as cofactor.

The enzyme catalyses L-alanine = D-alanine. The protein operates within amino-acid biosynthesis; D-alanine biosynthesis; D-alanine from L-alanine: step 1/1. In terms of biological role, catalyzes the interconversion of L-alanine and D-alanine. May also act on other amino acids. In Shewanella frigidimarina (strain NCIMB 400), this protein is Alanine racemase (alr).